A 362-amino-acid chain; its full sequence is tRNA-specific 2-thiouridylase MnmA (362 aa).

Residues 6–13 and Leu32 each bind ATP; that span reads AMSGGVDS. The active-site Nucleophile is Cys101. Cys101 and Cys197 are disulfide-bonded. Gly125 is a binding site for ATP. The interval 147–149 is interaction with tRNA; sequence KDQ. Cys197 acts as the Cysteine persulfide intermediate in catalysis.

It belongs to the MnmA/TRMU family.

The protein localises to the cytoplasm. It carries out the reaction S-sulfanyl-L-cysteinyl-[protein] + uridine(34) in tRNA + AH2 + ATP = 2-thiouridine(34) in tRNA + L-cysteinyl-[protein] + A + AMP + diphosphate + H(+). In terms of biological role, catalyzes the 2-thiolation of uridine at the wobble position (U34) of tRNA, leading to the formation of s(2)U34. The polypeptide is tRNA-specific 2-thiouridylase MnmA (Saccharopolyspora erythraea (strain ATCC 11635 / DSM 40517 / JCM 4748 / NBRC 13426 / NCIMB 8594 / NRRL 2338)).